We begin with the raw amino-acid sequence, 122 residues long: MKLFIILGALNAMMAVGTGAFGAHGLQGKISDHYLSVWEKATTYQMYHGLALLIIGVISGTTSINVNWAGWLIFAGIIFFSGSLYILVLTQIKVLGTITPIGGVLFIIGWIMLIIATFKFAG.

4 consecutive transmembrane segments (helical) span residues leucine 3–alanine 23, methionine 46–valine 66, alanine 69–leucine 89, and isoleucine 98–phenylalanine 118.

This sequence belongs to the UPF0382 family.

It localises to the cell membrane. This Staphylococcus aureus (strain bovine RF122 / ET3-1) protein is UPF0382 membrane protein SAB0533.